A 467-amino-acid polypeptide reads, in one-letter code: Gamma-aminobutyric acid receptor subunit gamma-3 (467 aa).

Residues Met1–Ala17 form the signal peptide. At Arg18 to Phe256 the chain is on the extracellular side. An N-linked (GlcNAc...) asparagine glycan is attached at Asn110. A disulfide bridge connects residues Cys171 and Cys185. Residue Asn228 is glycosylated (N-linked (GlcNAc...) asparagine). The chain crosses the membrane as a helical span at residues Thr257–Ile277. The Cytoplasmic portion of the chain corresponds to Lys278 to Pro283. The helical transmembrane segment at Ala284–Ala303 threads the bilayer. Topologically, residues Arg304–Ser311 are extracellular. The chain crosses the membrane as a helical span at residues Tyr312–Met332. The Cytoplasmic portion of the chain corresponds to Glu333–Arg446. A helical transmembrane segment spans residues Val447–Leu467.

The protein belongs to the ligand-gated ion channel (TC 1.A.9) family. Gamma-aminobutyric acid receptor (TC 1.A.9.5) subfamily. GABRG3 sub-subfamily. As to quaternary structure, heteropentamer, formed by a combination of alpha (GABRA1-6), beta (GABRB1-3), gamma (GABRG1-3), delta (GABRD), epsilon (GABRE), rho (GABRR1-3), pi (GABRP) and theta (GABRQ) chains, each subunit exhibiting distinct physiological and pharmacological properties. In terms of processing, may be palmitoylated. Expressed in brain.

The protein localises to the postsynaptic cell membrane. It localises to the cell membrane. The enzyme catalyses chloride(in) = chloride(out). With respect to regulation, allosterically potentiated by alphaxalone. Allosterically inhibited by pregnenolone sulfate. Inhibited by zinc and lanthanum. Its function is as follows. Gamma subunit of the heteropentameric ligand-gated chloride channel gated by gamma-aminobutyric acid (GABA), a major inhibitory neurotransmitter in the brain. GABA-gated chloride channels, also named GABA(A) receptors (GABAAR), consist of five subunits arranged around a central pore and contain GABA active binding site(s) located at the alpha and beta subunit interface(s). When activated by GABA, GABAARs selectively allow the flow of chloride across the cell membrane down their electrochemical gradient. The protein is Gamma-aminobutyric acid receptor subunit gamma-3 of Rattus norvegicus (Rat).